A 368-amino-acid chain; its full sequence is Peptide chain release factor 2 (368 aa).

Glutamine 250 bears the N5-methylglutamine mark.

This sequence belongs to the prokaryotic/mitochondrial release factor family. Post-translationally, methylated by PrmC. Methylation increases the termination efficiency of RF2.

The protein resides in the cytoplasm. Its function is as follows. Peptide chain release factor 2 directs the termination of translation in response to the peptide chain termination codons UGA and UAA. This Mycolicibacterium vanbaalenii (strain DSM 7251 / JCM 13017 / BCRC 16820 / KCTC 9966 / NRRL B-24157 / PYR-1) (Mycobacterium vanbaalenii) protein is Peptide chain release factor 2.